The following is a 455-amino-acid chain: Ribosome biogenesis protein NOP53 (455 aa).

Over residues 1 to 15 (MAPTNLTKKPSQYKQ) the composition is skewed to polar residues. Residues 1–25 (MAPTNLTKKPSQYKQSSRKGKKAWR) are disordered. Over residues 16 to 25 (SSRKGKKAWR) the composition is skewed to basic residues. Phosphoserine is present on Ser-31. The disordered stretch occupies residues 264–333 (HLMETLDDNE…RNKAKRHEEK (70 aa)). Residues 268-294 (TLDDNEEEESSSNEEEEEEEEENENEN) show a composition bias toward acidic residues. Residues 314–328 (VKNKKKTKYQRNKAK) are compositionally biased toward basic residues.

This sequence belongs to the NOP53 family. In terms of assembly, interacts with CBF5, FPR3, FPR4, NOP2, PIH1, RRN3, RRP6 and PAP2. Interacts with pre-60S ribosomal particles.

The protein localises to the nucleus. Its subcellular location is the nucleolus. It localises to the nucleoplasm. Functionally, late-acting factor in the nuclear maturation of 60S ribosomal subunits, which is required for normal acquisition of export competence. Required for the export of the large subunit. Acts to stimulate the RNase activity of the exosome complex, and may recruit the exosome to 7S pre-rRNA for processing. Associates with numerous RNAs including the 27S and 7S pre-rRNAs and the box H/ACA snoRNA snR37. Also interacts (via N-terminal region) with the mature 25S rRNA and the mature 5.8S rRNA. This is Ribosome biogenesis protein NOP53 from Saccharomyces cerevisiae (strain ATCC 204508 / S288c) (Baker's yeast).